The following is a 138-amino-acid chain: Basic phospholipase A2 homolog bothropstoxin-II (138 aa).

The N-terminal stretch at 1 to 16 (MRTLWIMAVLLVGVEG) is a signal peptide. 7 cysteine pairs are disulfide-bonded: cysteine 42–cysteine 131, cysteine 44–cysteine 60, cysteine 59–cysteine 111, cysteine 65–cysteine 138, cysteine 66–cysteine 104, cysteine 73–cysteine 97, and cysteine 91–cysteine 102. Residues 121-133 (KRYMAYPDVLCKK) form an important for membrane-damaging activities in eukaryotes and bacteria; heparin-binding region.

Belongs to the phospholipase A2 family. Group II subfamily. D49 sub-subfamily. In terms of assembly, homodimer; non-covalently linked (probable alternative/compact dimer conformation). Expressed by the venom gland.

Its subcellular location is the secreted. Its function is as follows. Snake venom phospholipase A2 (PLA2) that shows low enzymatic activity even tough it conserves the catalytic residues. Shows a strong myotoxic activity and induces indirect hemolysis, anticoagulant properties, and cytotoxic activities. In vivo, it induces muscle necrosis, accompanied by polymorphonuclear cell infiltration, and edema in the mouse paw. It exerts its function even in the absence of extracellular calcium, indicating it is not a calcium-dependent enzyme. A model of myotoxic mechanism has been proposed: an apo Lys49-PLA2 is activated by the entrance of a hydrophobic molecule (e.g. fatty acid) at the hydrophobic channel of the protein leading to a reorientation of a monomer. This reorientation causes a transition between 'inactive' to 'active' states, causing alignment of C-terminal and membrane-docking sites (MDoS) side-by-side and putting the membrane-disruption sites (MDiS) in the same plane, exposed to solvent and in a symmetric position for both monomers. The MDoS region stabilizes the toxin on membrane by the interaction of charged residues with phospholipid head groups. Subsequently, the MDiS region destabilizes the membrane with penetration of hydrophobic residues. This insertion causes a disorganization of the membrane, allowing an uncontrolled influx of ions (i.e. calcium and sodium), and eventually triggering irreversible intracellular alterations and cell death. The polypeptide is Basic phospholipase A2 homolog bothropstoxin-II (Bothrops jararacussu (Jararacussu)).